Reading from the N-terminus, the 437-residue chain is Sperm-associated antigen 4 protein (437 aa).

Over residues 1–12 (MRRSSRPGSASS) the composition is skewed to low complexity. Residues 1–88 (MRRSSRPGSA…KPAPRSHNWQ (88 aa)) form a disordered region. Polar residues-rich tracts occupy residues 19–31 (NFFSENSSMSITS) and 72–88 (WAGSSQQKPAPRSHNWQ). Transmembrane regions (helical) follow at residues 135–155 (FLSLLFQGLSVLLSLAGDVLV) and 166–186 (FLFTAVSLLSLFLSAFWLGLL). Positions 197–244 (KEMLTLSEYHERVRSQGQQLQQLQAELDKLHKEVSTVRAANSERVAKL) form a coiled coil. Residues 265 to 425 (GASIDLQKTS…YRVRAHGVRT (161 aa)) enclose the SUN domain.

In terms of assembly, homodimer. Interacts with ODF1. May associate with microtubules. Interacts with SUN3 and SYNE1; suggesting the formation of a spermatogenesis-specific LINC complex; a SUN domain-based heterotrimer with SUN3 may associate with SYNE1. Interacts with SEPT12 and LMNB1; during spermatogenesis. In terms of tissue distribution, predominantly epressed in testis. Expressed in ejaculated spermatozoa (at protein level).

Its subcellular location is the membrane. The protein localises to the cytoplasm. It is found in the cytoskeleton. The protein resides in the flagellum axoneme. It localises to the nucleus envelope. Its subcellular location is the nucleus inner membrane. In terms of biological role, involved in spermatogenesis. Required for sperm head formation but not required to establish and maintain general polarity of the sperm head. Required for anchoring and organization of the manchette. Required for targeting of SUN3 and probably SYNE1 through a probable SUN1:SYNE3 LINC complex to the nuclear envelope and involved in accurate posterior sperm head localization of the complex. May anchor SUN3 the nuclear envelope. Involved in maintenance of the nuclear envelope integrity. May assist the organization and assembly of outer dense fibers (ODFs), a specific structure of the sperm tail. This Homo sapiens (Human) protein is Sperm-associated antigen 4 protein (SPAG4).